A 69-amino-acid polypeptide reads, in one-letter code: uncharacterized protein (69 aa).

Residues 1–21 (MELLIPLSLLGLYLFSGTRDS) form the signal peptide. The N-linked (GlcNAc...) asparagine glycan is linked to asparagine 41.

Its subcellular location is the secreted. This is an uncharacterized protein from Dictyostelium discoideum (Social amoeba).